The sequence spans 370 residues: Probable G-protein coupled receptor 85 (370 aa).

At M1 to T25 the chain is on the extracellular side. Residue N3 is glycosylated (N-linked (GlcNAc...) asparagine). Residues S26 to A46 traverse the membrane as a helical segment. At K47–Y57 the chain is on the cytoplasmic side. The helical transmembrane segment at F58–F78 threads the bilayer. The Extracellular portion of the chain corresponds to N79–V96. N83 carries an N-linked (GlcNAc...) asparagine glycan. A disulfide bridge links C94 with C172. The chain crosses the membrane as a helical span at residues I97–V117. Topologically, residues T118–T137 are cytoplasmic. The helical transmembrane segment at C138–L158 threads the bilayer. Over D159–M188 the chain is Extracellular. N182 is a glycosylation site (N-linked (GlcNAc...) asparagine). The helical transmembrane segment at L189 to V209 threads the bilayer. Over H210–M286 the chain is Cytoplasmic. Residues F287–W307 form a helical membrane-spanning segment. Topologically, residues R308–G313 are extracellular. Residues P314–I334 form a helical membrane-spanning segment. The Cytoplasmic segment spans residues N335–I370.

Belongs to the G-protein coupled receptor 1 family. In terms of assembly, interacts with DLG4 and DLG3.

The protein resides in the cell membrane. The protein localises to the endoplasmic reticulum. Its function is as follows. Orphan receptor. The protein is Probable G-protein coupled receptor 85 (GPR85) of Pongo abelii (Sumatran orangutan).